The chain runs to 459 residues: Phosphoglucosamine mutase (459 aa).

Residue serine 102 is the Phosphoserine intermediate of the active site. Serine 102, aspartate 243, aspartate 245, and aspartate 247 together coordinate Mg(2+). Serine 102 is subject to Phosphoserine.

Belongs to the phosphohexose mutase family. Mg(2+) is required as a cofactor. In terms of processing, activated by phosphorylation.

It carries out the reaction alpha-D-glucosamine 1-phosphate = D-glucosamine 6-phosphate. Its function is as follows. Catalyzes the conversion of glucosamine-6-phosphate to glucosamine-1-phosphate. The chain is Phosphoglucosamine mutase from Bartonella quintana (strain Toulouse) (Rochalimaea quintana).